A 346-amino-acid chain; its full sequence is Annexin A1 (346 aa).

Alanine 2 carries the N-acetylalanine modification. At serine 5 the chain carries Phosphoserine; by TRPM7. An Isoglutamyl lysine isopeptide (Gln-Lys) (interchain with K-?) cross-link involves residue glutamine 19. Tyrosine 21 carries the phosphotyrosine; by EGFR modification. Serine 27 is modified (phosphoserine; by PKC). 2 positions are modified to phosphoserine: serine 34 and serine 37. Threonine 41 carries the post-translational modification Phosphothreonine. Annexin repeat units lie at residues 42–113 (FNPS…ALLK), 114–185 (TPAQ…SLAK), 197–269 (DLAD…AIVK), and 273–344 (SKPA…ALCG). Residue lysine 58 is modified to N6-acetyllysine. Ca(2+) contacts are provided by glycine 59, valine 60, glutamate 62, lysine 97, leucine 100, glutamate 105, methionine 127, glycine 129, glycine 131, threonine 132, and glutamate 134. Threonine 136 bears the Phosphothreonine mark. 3 residues coordinate Ca(2+): aspartate 171, glycine 210, and arginine 213. A Glycyl lysine isopeptide (Lys-Gly) (interchain with G-Cter in SUMO1); alternate cross-link involves residue lysine 214. A Glycyl lysine isopeptide (Lys-Gly) (interchain with G-Cter in SUMO2); alternate cross-link involves residue lysine 214. Glycine 215 provides a ligand contact to Ca(2+). Lysine 239 carries the post-translational modification N6-acetyllysine. Residues aspartate 253, glutamate 255, and leucine 256 each contribute to the Ca(2+) site. Residue lysine 257 forms a Glycyl lysine isopeptide (Lys-Gly) (interchain with G-Cter in SUMO1) linkage. 4 residues coordinate Ca(2+): glutamate 261, methionine 286, glycine 288, and glycine 290. Residue lysine 312 is modified to N6-acetyllysine. A disulfide bond links cysteine 324 and cysteine 343. Positions 328, 330, and 331 each coordinate Ca(2+). Lysine 332 participates in a covalent cross-link: Glycyl lysine isopeptide (Lys-Gly) (interchain with G-Cter in SUMO1). Position 336 (glutamate 336) interacts with Ca(2+).

This sequence belongs to the annexin family. In terms of assembly, homodimer; non-covalently linked. Homodimer; linked by transglutamylation. Homodimers linked by transglutamylation are observed in placenta, but not in other tissues. Interacts with S100A11. Heterotetramer, formed by two molecules each of S100A11 and ANXA1. Interacts with DYSF. Interacts with EGFR. In terms of processing, phosphorylated by protein kinase C, EGFR and TRPM7. Phosphorylated in response to EGF treatment. Sumoylated. Post-translationally, proteolytically cleaved by cathepsin CTSG to release the active N-terminal peptide Ac2-26.

The protein resides in the nucleus. The protein localises to the cytoplasm. It is found in the cell projection. Its subcellular location is the cilium. It localises to the basolateral cell membrane. The protein resides in the lateral cell membrane. The protein localises to the cell membrane. It is found in the apical cell membrane. Its subcellular location is the membrane. It localises to the early endosome. The protein resides in the cytoplasmic vesicle membrane. The protein localises to the endosome membrane. It is found in the secreted. Its subcellular location is the extracellular space. It localises to the extracellular exosome. The protein resides in the cytoplasmic vesicle. The protein localises to the secretory vesicle lumen. It is found in the phagocytic cup. Functionally, plays important roles in the innate immune response as effector of glucocorticoid-mediated responses and regulator of the inflammatory process. Has anti-inflammatory activity. Plays a role in glucocorticoid-mediated down-regulation of the early phase of the inflammatory response. Contributes to the adaptive immune response by enhancing signaling cascades that are triggered by T-cell activation, regulates differentiation and proliferation of activated T-cells. Promotes the differentiation of T-cells into Th1 cells and negatively regulates differentiation into Th2 cells. Has no effect on unstimulated T-cells. Negatively regulates hormone exocytosis via activation of the formyl peptide receptors and reorganization of the actin cytoskeleton. Has high affinity for Ca(2+) and can bind up to eight Ca(2+) ions. Displays Ca(2+)-dependent binding to phospholipid membranes. Plays a role in the formation of phagocytic cups and phagosomes. Plays a role in phagocytosis by mediating the Ca(2+)-dependent interaction between phagosomes and the actin cytoskeleton. In terms of biological role, functions at least in part by activating the formyl peptide receptors and downstream signaling cascades. Promotes chemotaxis of granulocytes and monocytes via activation of the formyl peptide receptors. Promotes rearrangement of the actin cytoskeleton, cell polarization and cell migration. Promotes resolution of inflammation and wound healing. Acts via neutrophil N-formyl peptide receptors to enhance the release of CXCL2. The sequence is that of Annexin A1 (ANXA1) from Pan troglodytes (Chimpanzee).